Here is a 585-residue protein sequence, read N- to C-terminus: Lipoprotein LpqB (585 aa).

Positions 1 to 17 (MGRKLLGLLMLAVLLAG) are cleaved as a signal peptide. Cys-18 carries the N-palmitoyl cysteine lipid modification. Cys-18 carries the S-diacylglycerol cysteine lipid modification. Disordered stretches follow at residues 24–48 (SSAP…TPGM) and 560–585 (PSAD…VLPG).

The protein belongs to the LpqB lipoprotein family.

Its subcellular location is the cell membrane. The protein is Lipoprotein LpqB of Mycolicibacterium paratuberculosis (strain ATCC BAA-968 / K-10) (Mycobacterium paratuberculosis).